The primary structure comprises 93 residues: Small ribosomal subunit protein bS18 (93 aa).

This sequence belongs to the bacterial ribosomal protein bS18 family. In terms of assembly, part of the 30S ribosomal subunit. Forms a tight heterodimer with protein bS6.

Functionally, binds as a heterodimer with protein bS6 to the central domain of the 16S rRNA, where it helps stabilize the platform of the 30S subunit. This is Small ribosomal subunit protein bS18 from Variovorax paradoxus (strain S110).